We begin with the raw amino-acid sequence, 346 residues long: Flap endonuclease 1 (346 aa).

The N-domain stretch occupies residues 1 to 102 (MGVTELGKLI…AEIEERRKVK (102 aa)). Positions 31, 84, 156, 158, 177, 179, and 239 each coordinate Mg(2+). Residues 120–261 (DVAKYMKRAV…KALKLVWEFG (142 aa)) are I-domain.

This sequence belongs to the XPG/RAD2 endonuclease family. FEN1 subfamily. As to quaternary structure, interacts with PCNA. PCNA stimulates the nuclease activity without altering cleavage specificity. Mg(2+) serves as cofactor.

Its function is as follows. Structure-specific nuclease with 5'-flap endonuclease and 5'-3' exonuclease activities involved in DNA replication and repair. During DNA replication, cleaves the 5'-overhanging flap structure that is generated by displacement synthesis when DNA polymerase encounters the 5'-end of a downstream Okazaki fragment. Binds the unpaired 3'-DNA end and kinks the DNA to facilitate 5' cleavage specificity. Cleaves one nucleotide into the double-stranded DNA from the junction in flap DNA, leaving a nick for ligation. Also involved in the base excision repair (BER) pathway. Acts as a genome stabilization factor that prevents flaps from equilibrating into structures that lead to duplications and deletions. Also possesses 5'-3' exonuclease activity on nicked or gapped double-stranded DNA. This chain is Flap endonuclease 1, found in Pyrobaculum islandicum (strain DSM 4184 / JCM 9189 / GEO3).